The primary structure comprises 387 residues: LL-diaminopimelate aminotransferase (387 aa).

The substrate site is built by Tyr-14 and Gly-39. Pyridoxal 5'-phosphate is bound by residues Tyr-68, 102–103, Tyr-127, Asn-177, Tyr-208, and 236–238; these read SK and SLS. Residues Lys-103, Tyr-127, and Asn-177 each coordinate substrate. At Lys-239 the chain carries N6-(pyridoxal phosphate)lysine. Arg-247 is a binding site for pyridoxal 5'-phosphate. Arg-365 provides a ligand contact to substrate.

The protein belongs to the class-I pyridoxal-phosphate-dependent aminotransferase family. LL-diaminopimelate aminotransferase subfamily. In terms of assembly, homodimer. It depends on pyridoxal 5'-phosphate as a cofactor.

The catalysed reaction is (2S,6S)-2,6-diaminopimelate + 2-oxoglutarate = (S)-2,3,4,5-tetrahydrodipicolinate + L-glutamate + H2O + H(+). It participates in amino-acid biosynthesis; L-lysine biosynthesis via DAP pathway; LL-2,6-diaminopimelate from (S)-tetrahydrodipicolinate (aminotransferase route): step 1/1. In terms of biological role, involved in the synthesis of meso-diaminopimelate (m-DAP or DL-DAP), required for both lysine and peptidoglycan biosynthesis. Catalyzes the direct conversion of tetrahydrodipicolinate to LL-diaminopimelate. The polypeptide is LL-diaminopimelate aminotransferase (Aquifex aeolicus (strain VF5)).